Consider the following 153-residue polypeptide: MLGNYYFAIVGHYDNPVYEKEFNQQMKMDSNDHRHLNQFIVHAALDLVDESMWGTTGMYLKSVDKFNEWFVSAFDPPLSWIIDPQFFLDLTSWMRFMMLHDVKNDDGIKNFFSDVYETFIKVLMNPFYEINSKIKSANFDKKVLLAAKKHILP.

This sequence belongs to the TRAPP small subunits family. Sedlin subfamily. Part of the multisubunit TRAPP (transport protein particle) complex.

It localises to the cytoplasm. The protein localises to the perinuclear region. It is found in the endoplasmic reticulum. The protein resides in the golgi apparatus. Its function is as follows. May play a role in vesicular transport from endoplasmic reticulum to Golgi. The sequence is that of Probable trafficking protein particle complex subunit 2 from Nematostella vectensis (Starlet sea anemone).